The sequence spans 239 residues: MEIFPAIDLKEGRCVRLYQGEFSKETVMNEDPVAQAIIFEKLGAKILHVVDLDGAIVGESVNLPVIEKICKAVRIPVQIGGGVRSLAAVEKLLSVGVEKVILGTAALYDKSFLEEAVRLYKEQIIVGIDAKNGFVATRGWLDVSEISYIDLAKQMESVGVQTIVFTDISKDGTLAGPNFEQLELLQKSVGIRVIASGGVASIQQVKRLNDMNIYGVIIGKALYEKTIDLEKVLQVTKLC.

Residue aspartate 8 is the Proton acceptor of the active site. Residue aspartate 129 is the Proton donor of the active site.

Belongs to the HisA/HisF family.

The protein localises to the cytoplasm. It catalyses the reaction 1-(5-phospho-beta-D-ribosyl)-5-[(5-phospho-beta-D-ribosylamino)methylideneamino]imidazole-4-carboxamide = 5-[(5-phospho-1-deoxy-D-ribulos-1-ylimino)methylamino]-1-(5-phospho-beta-D-ribosyl)imidazole-4-carboxamide. It functions in the pathway amino-acid biosynthesis; L-histidine biosynthesis; L-histidine from 5-phospho-alpha-D-ribose 1-diphosphate: step 4/9. The chain is 1-(5-phosphoribosyl)-5-[(5-phosphoribosylamino)methylideneamino] imidazole-4-carboxamide isomerase from Bacillus mycoides (strain KBAB4) (Bacillus weihenstephanensis).